Here is a 165-residue protein sequence, read N- to C-terminus: Large ribosomal subunit protein uL10 (165 aa).

This sequence belongs to the universal ribosomal protein uL10 family. In terms of assembly, part of the ribosomal stalk of the 50S ribosomal subunit. The N-terminus interacts with L11 and the large rRNA to form the base of the stalk. The C-terminus forms an elongated spine to which L12 dimers bind in a sequential fashion forming a multimeric L10(L12)X complex.

Its function is as follows. Forms part of the ribosomal stalk, playing a central role in the interaction of the ribosome with GTP-bound translation factors. This chain is Large ribosomal subunit protein uL10, found in Burkholderia cenocepacia (strain HI2424).